The primary structure comprises 103 residues: Thioredoxin (103 aa).

Positions M1–V103 constitute a Thioredoxin domain. The cysteines at positions 28 and 31 are disulfide-linked.

Belongs to the thioredoxin family.

In terms of biological role, component of the thioredoxin-thioredoxin reductase system. Participates in various redox reactions through the reversible oxidation of its active center dithiol to a disulfide and catalyzes dithiol-disulfide exchange reactions. The protein is Thioredoxin (trxA) of Listeria innocua serovar 6a (strain ATCC BAA-680 / CLIP 11262).